The sequence spans 177 residues: Large ribosomal subunit protein uL6 (177 aa).

Belongs to the universal ribosomal protein uL6 family. As to quaternary structure, part of the 50S ribosomal subunit.

Functionally, this protein binds to the 23S rRNA, and is important in its secondary structure. It is located near the subunit interface in the base of the L7/L12 stalk, and near the tRNA binding site of the peptidyltransferase center. The polypeptide is Large ribosomal subunit protein uL6 (Rhizobium etli (strain CIAT 652)).